A 275-amino-acid chain; its full sequence is Large ribosomal subunit protein uL2 (275 aa).

The segment at 210-275 (GRNRHRGIRP…DKLIISRKKK (66 aa)) is disordered. Residues 257–275 (FKTRKKKASDKLIISRKKK) show a composition bias toward basic residues.

It belongs to the universal ribosomal protein uL2 family. Part of the 50S ribosomal subunit. Forms a bridge to the 30S subunit in the 70S ribosome.

In terms of biological role, one of the primary rRNA binding proteins. Required for association of the 30S and 50S subunits to form the 70S ribosome, for tRNA binding and peptide bond formation. It has been suggested to have peptidyltransferase activity; this is somewhat controversial. Makes several contacts with the 16S rRNA in the 70S ribosome. The sequence is that of Large ribosomal subunit protein uL2 from Helicobacter hepaticus (strain ATCC 51449 / 3B1).